The primary structure comprises 236 residues: Small ribosomal subunit protein uS3 (236 aa).

Residues 39–107 enclose the KH type-2 domain; it reads IREVLEKQLK…EVHLNIVEVR (69 aa). A disordered region spans residues 214-236; that stretch reads ASERRALEGGDSGGGRSRRDDRG.

The protein belongs to the universal ribosomal protein uS3 family. Part of the 30S ribosomal subunit. Forms a tight complex with proteins S10 and S14.

Functionally, binds the lower part of the 30S subunit head. Binds mRNA in the 70S ribosome, positioning it for translation. The sequence is that of Small ribosomal subunit protein uS3 from Parvibaculum lavamentivorans (strain DS-1 / DSM 13023 / NCIMB 13966).